The chain runs to 318 residues: MGARVIDGRPIAGELKKRVASEVEGLAARGVRPGLATVLVGEDYAARAYERRVGGLAAELGCRYVCERLPREAEEADVLAVVGKLNADPRVSGILVLRPLPGHISEPAVFSALDPLKDIEAVHPVNAGLLALGRPRYVPSTPAACFYLLDRYLERSGRPPEEFYPRSTVVVVGRSNNVGKPAVSLGFARGAAVISCDANAYRAGRLREHTLKADALIVAAGVAGLIDESYVREGVIAVDVGINPVADPGGSGRTLLVGDLDFGSVARKAEALTPVPGGVGPITDVWLLKNTVAAGRGLASQAKARCLLRGSHAHSSLI.

NADP(+) contacts are provided by residues 173–175 and I242; that span reads GRS.

Belongs to the tetrahydrofolate dehydrogenase/cyclohydrolase family. In terms of assembly, homodimer.

The catalysed reaction is (6R)-5,10-methylene-5,6,7,8-tetrahydrofolate + NADP(+) = (6R)-5,10-methenyltetrahydrofolate + NADPH. It catalyses the reaction (6R)-5,10-methenyltetrahydrofolate + H2O = (6R)-10-formyltetrahydrofolate + H(+). It participates in one-carbon metabolism; tetrahydrofolate interconversion. Catalyzes the oxidation of 5,10-methylenetetrahydrofolate to 5,10-methenyltetrahydrofolate and then the hydrolysis of 5,10-methenyltetrahydrofolate to 10-formyltetrahydrofolate. This chain is Bifunctional protein FolD 3, found in Rubrobacter xylanophilus (strain DSM 9941 / JCM 11954 / NBRC 16129 / PRD-1).